A 602-amino-acid polypeptide reads, in one-letter code: Cytoskeleton-associated protein 4 (602 aa).

A disordered region spans residues 1–83 (MPSAKQRGSK…GGGGKSSSSS (83 aa)). Residues 1-106 (MPSAKQRGSK…SASCSRRLGR (106 aa)) lie on the Cytoplasmic side of the membrane. 3 positions are modified to phosphoserine: S3, S17, and S19. K21 is subject to N6-acetyllysine. A compositionally biased stretch (pro residues) spans 35–52 (KPPPAPQQPPPPPAPHPQ). The segment covering 53-64 (QHPQQHPQNQAH) has biased composition (low complexity). The S-palmitoyl cysteine; by ZDHHC2 moiety is linked to residue C100. The chain crosses the membrane as a helical span at residues 107-127 (ALNFLFYLALVAAAAFSGWCV). Residues 128–602 (HHVLEEVQQV…VKVEKIHEKV (475 aa)) are Extracellular-facing. Residues 130–214 (VLEEVQQVRR…QKLQNEILKD (85 aa)) adopt a coiled-coil conformation. S232 bears the Phosphoserine; by FAM20C mark. 2 coiled-coil regions span residues 256-460 (TEVQ…GLGS) and 533-602 (LSSL…HEKV). At S312 the chain carries Phosphoserine.

As to quaternary structure, interacts with REEP5. In terms of processing, reversibly palmitoylated. Palmitoylation at Cys-100 by ZDHHC2 is required for its trafficking from the ER to the plasma membrane and for its perinuclear localization. Palmitoylation by ZDHHC2 is also required for its function in APF-mediated antiproliferative signaling. Increased phosphorylation during mitosis prevents binding to microtubules.

Its subcellular location is the endoplasmic reticulum membrane. It localises to the cell membrane. The protein resides in the cytoplasm. It is found in the cytoskeleton. The protein localises to the perinuclear region. In terms of biological role, mediates the anchoring of the endoplasmic reticulum to microtubules. Functionally, high-affinity epithelial cell surface receptor for the FZD8-related low molecular weight sialoglycopeptide APF/antiproliferative factor. Mediates the APF antiproliferative signaling within cells. The protein is Cytoskeleton-associated protein 4 (CKAP4) of Homo sapiens (Human).